Reading from the N-terminus, the 275-residue chain is MFRYLFVLSRPRFWLYLAGPVLVGVSYGATTVGELFSAPAVVLFSYFLLPANIYLYGINDVFDRDVDETNPKKDGRESRYRGGAAVAVIVAVCGVFLGFVAAPLPAEAWPYLAAWFVLATEYSAPPLRFKTTPVLDSLSNGLYVLPAAAAYAGVSGTHPPLLAVAGGWLWAMGMHTFSAIPDIEPDRAAGIQTTATALGADRALAYCAGIWLLSAAVFALVDVRFGLLLLAYPVLVFGIRRLQVAVGRAYWWYPAVNTLVGMVFTLGGLWGVVHG.

The next 9 membrane-spanning stretches (helical) occupy residues 13 to 33 (FWLY…TTVG), 38 to 58 (APAV…LYGI), 84 to 104 (AAVA…AAPL), 107 to 127 (EAWP…APPL), 134 to 154 (VLDS…YAGV), 160 to 180 (PLLA…FSAI), 203 to 223 (ALAY…LVDV), 225 to 245 (FGLL…LQVA), and 253 to 273 (YPAV…WGVV).

It belongs to the UbiA prenyltransferase family.

It localises to the cell membrane. It carries out the reaction all-trans-lycopene + dimethylallyl diphosphate + H2O = dihydroisopentenyldehydrorhodopin + diphosphate. The enzyme catalyses isopentenyldehydrorhodopin + dimethylallyl diphosphate + H2O = dihydrobisanhydrobacterioruberin + diphosphate. It functions in the pathway carotenoid biosynthesis. Inhibited by bacterioopsin. Functionally, involved in the biosynthesis of the acyclic C50 carotenoid bacterioruberin (BR). Acts as a bifunctional elongase/hydratase that catalyzes the elongation of lycopene by attaching a C(5) isoprene unit at C-2, as well as the hydroxylation of the previous end of the molecule. The enzyme acts at both ends of the substrate, and catalyzes the conversion of lycopene to the C(45) intermediate dihydroisopentenyldehydrorhodopin (DH-IDR) and the conversion of isopentenyldehydrorhodopin (IDR) to the C(50) carotenoid dihydrobisanhydrobacterioruberin (DH-BABR). Can also catalyze the conversion of lycopene to tetrahydrobisanhydrobacterioruberin (TH-BABR). The polypeptide is Lycopene elongase/hydratase (Halobacterium salinarum (strain ATCC 700922 / JCM 11081 / NRC-1) (Halobacterium halobium)).